Here is a 129-residue protein sequence, read N- to C-terminus: uncharacterized protein (129 aa).

A helical transmembrane segment spans residues 103 to 125 (AISSAFQYGLSTSNFFFIFLYIF).

It is found in the membrane. This is an uncharacterized protein from Acanthamoeba polyphaga (Amoeba).